The following is a 130-amino-acid chain: Methylglyoxal synthase (130 aa).

Residues 1-130 (MSKPRIALIA…DLARNMQDVC (130 aa)) enclose the MGS-like domain. Substrate is bound by residues His-11, Lys-15, 37 to 40 (TGTT), and 57 to 58 (SG). Catalysis depends on Asp-63, which acts as the Proton donor/acceptor. A substrate-binding site is contributed by His-90.

This sequence belongs to the methylglyoxal synthase family.

It catalyses the reaction dihydroxyacetone phosphate = methylglyoxal + phosphate. In terms of biological role, catalyzes the formation of methylglyoxal from dihydroxyacetone phosphate. This is Methylglyoxal synthase from Burkholderia cenocepacia (strain HI2424).